The following is a 507-amino-acid chain: Sperm-associated antigen 6 (507 aa).

ARM repeat units lie at residues 31–70 (PQNI…RLAN), 73–112 (DDLA…AVGK), 115–154 (PQLA…YIAR), 157–196 (TELS…DISK), 199–238 (PELA…QIAK), 241–280 (VDLA…EIAK), 325–365 (ENLA…QLGR), and 402–441 (KAIK…KVLP).

Interacts with SPAG16 and SPAG17. In terms of tissue distribution, highly expressed in testis. Not detected in prostate, ovary, spleen, thymus, small intestine, colon and peripheral blood leukocytes.

It localises to the cytoplasm. The protein localises to the cytoskeleton. Its subcellular location is the cell projection. It is found in the cilium. The protein resides in the flagellum. It localises to the cilium axoneme. In terms of biological role, important for structural integrity of the central apparatus in the sperm tail and for flagellar motility. This Mus musculus (Mouse) protein is Sperm-associated antigen 6 (Spag6).